Reading from the N-terminus, the 854-residue chain is Gamma-secretase-activating protein (854 aa).

Belongs to the GSAP family. Interacts with APP; specifically interacts with the CTF-alpha product of APP. Interacts with the gamma-secretase complex. The protein is first synthesized as a holoprotein form of 98 kDa and rapidly processed into the gamma-secretase-activating protein 16 kDa C-terminal form, which constitutes the predominant form. Widely expressed.

It localises to the golgi apparatus. The protein resides in the trans-Golgi network. Functionally, regulator of gamma-secretase activity, which specifically activates the production of amyloid-beta protein (amyloid-beta protein 40 and amyloid-beta protein 42), without affecting the cleavage of other gamma-secretase targets such has Notch. The gamma-secretase complex is an endoprotease complex that catalyzes the intramembrane cleavage of integral membrane proteins such as Notch receptors and APP (amyloid-beta precursor protein). Specifically promotes the gamma-cleavage of APP CTF-alpha (also named APP-CTF) by the gamma-secretase complex to generate amyloid-beta, while it reduces the epsilon-cleavage of APP CTF-alpha, leading to a low production of AICD. This Homo sapiens (Human) protein is Gamma-secretase-activating protein (GSAP).